The following is a 575-amino-acid chain: Alpha-(1,6)-fucosyltransferase (575 aa).

Residues 1–9 (MRPWTGSWR) lie on the Cytoplasmic side of the membrane. Residues 10 to 30 (WIMLILFAWGTLLFYIGGHLV) form a helical; Signal-anchor for type II membrane protein membrane-spanning segment. At 31 to 575 (RDNDHPDHSS…KYPTYPEAEK (545 aa)) the chain is on the lumenal side. 3 disulfide bridges follow: Cys-204-Cys-266, Cys-212-Cys-230, and Cys-218-Cys-222. A GT23 domain is found at 206 to 493 (KAKKLVCNIN…PDASANFHSL (288 aa)). Ser-278 bears the Phosphoserine mark. The short motif at 299 to 305 (PRPPYLP) is the SH3-binding element. The interval 365 to 366 (RR) is important for donor substrate binding. Cysteines 465 and 472 form a disulfide. Residues 502–563 (QNAHNQIAIY…PSYKVREKIE (62 aa)) enclose the SH3 domain.

This sequence belongs to the glycosyltransferase 23 family. Post-translationally, tyrosine phosphorylated by PKDCC/VLK.

It localises to the golgi apparatus. Its subcellular location is the golgi stack membrane. The enzyme catalyses N(4)-{beta-D-GlcNAc-(1-&gt;2)-alpha-D-Man-(1-&gt;3)-[beta-D-GlcNAc-(1-&gt;2)-alpha-D-Man-(1-&gt;6)]-beta-D-Man-(1-&gt;4)-beta-D-GlcNAc-(1-&gt;4)-beta-D-GlcNAc}-L-asparaginyl-[protein] + GDP-beta-L-fucose = an N(4)-{beta-D-GlcNAc-(1-&gt;2)-alpha-D-Man-(1-&gt;3)-[beta-D-GlcNAc-(1-&gt;2)-alpha-D-Man-(1-&gt;6)]-beta-D-Man-(1-&gt;4)-beta-D-GlcNAc-(1-&gt;4)-[alpha-L-Fuc-(1-&gt;6)]-beta-D-GlcNAc}-L-asparaginyl-[protein] + GDP + H(+). It participates in protein modification; protein glycosylation. Its function is as follows. Catalyzes the addition of fucose in alpha 1-6 linkage to the first GlcNAc residue, next to the peptide chains in N-glycans. The protein is Alpha-(1,6)-fucosyltransferase (FUT8) of Homo sapiens (Human).